The chain runs to 189 residues: Elongation factor P (189 aa).

Lys-34 bears the N6-(3,6-diaminohexanoyl)-5-hydroxylysine mark.

It belongs to the elongation factor P family. In terms of processing, may be beta-lysylated on the epsilon-amino group of Lys-34 by the combined action of EpmA and EpmB, and then hydroxylated on the C5 position of the same residue by EpmC (if this protein is present). Lysylation is critical for the stimulatory effect of EF-P on peptide-bond formation. The lysylation moiety may extend toward the peptidyltransferase center and stabilize the terminal 3-CCA end of the tRNA. Hydroxylation of the C5 position on Lys-34 may allow additional potential stabilizing hydrogen-bond interactions with the P-tRNA.

It localises to the cytoplasm. Its pathway is protein biosynthesis; polypeptide chain elongation. Functionally, involved in peptide bond synthesis. Alleviates ribosome stalling that occurs when 3 or more consecutive Pro residues or the sequence PPG is present in a protein, possibly by augmenting the peptidyl transferase activity of the ribosome. Modification of Lys-34 is required for alleviation. This Nitrosococcus oceani (strain ATCC 19707 / BCRC 17464 / JCM 30415 / NCIMB 11848 / C-107) protein is Elongation factor P.